Here is a 108-residue protein sequence, read N- to C-terminus: Nucleoid-associated protein HCH_02614 (108 aa).

This sequence belongs to the YbaB/EbfC family. As to quaternary structure, homodimer.

It localises to the cytoplasm. The protein localises to the nucleoid. Binds to DNA and alters its conformation. May be involved in regulation of gene expression, nucleoid organization and DNA protection. The polypeptide is Nucleoid-associated protein HCH_02614 (Hahella chejuensis (strain KCTC 2396)).